The chain runs to 911 residues: General transcription factor 3C polypeptide 2 (911 aa).

2 disordered regions span residues 34–187 (LDVK…RRRA) and 205–297 (ALPA…MAPN). Over residues 35–46 (DVKTSSEMTSAE) the composition is skewed to polar residues. Position 63 is a phosphoserine (serine 63). The span at 64-81 (PDQRRLPPEQESLSRLEQ) shows a compositional bias: basic and acidic residues. Basic residues predominate over residues 92-112 (SKPRASKPGRKRGGRTRKGPK). Over residues 114 to 123 (PQQPNPPSAP) the composition is skewed to pro residues. A phosphoserine mark is found at serine 132, serine 165, serine 167, serine 220, and serine 260. Residues 253–262 (EAEDVEESEG) are compositionally biased toward acidic residues. Positions 263–275 (PSESSSEPEPAVP) are enriched in low complexity. WD repeat units lie at residues 465 to 521 (CDNG…ALLA) and 552 to 593 (SECG…PLQR). A Phosphoserine modification is found at serine 597. Residues 611–651 (AHDQAVRTLQWCKANSHFLASAGSDRKIKFWDLRRPYEPIN) form a WD 3 repeat. Residues 765–785 (SPEGPDHSSASSGVPNPPKAR) form a disordered region. One copy of the WD 4 repeat lies at 832-874 (LQLEAIHKVRFSPNLDSYGWLVSGGQSGLVRIHFVRGLASPLG). Residues serine 871, serine 892, and serine 893 each carry the phosphoserine modification. The interval 889-911 (FQPSSPTRRPGFSPTSHRLLPTP) is disordered. Position 895 is a phosphothreonine (threonine 895). Phosphoserine is present on serine 901.

As to quaternary structure, part of the TFIIIC subcomplex TFIIIC2, consisting of six subunits, GTF3C1, GTF3C2, GTF3C3, GTF3C4, GTF3C5 and GTF3C6.

The protein localises to the nucleus. Functionally, required for RNA polymerase III-mediated transcription. Component of TFIIIC that initiates transcription complex assembly on tRNA and is required for transcription of 5S rRNA and other stable nuclear and cytoplasmic RNAs. May play a direct role in stabilizing interactions of TFIIIC2 with TFIIIC1. The protein is General transcription factor 3C polypeptide 2 (GTF3C2) of Pongo abelii (Sumatran orangutan).